A 237-amino-acid chain; its full sequence is Phosphoribosylaminoimidazole-succinocarboxamide synthase (237 aa).

This sequence belongs to the SAICAR synthetase family.

It catalyses the reaction 5-amino-1-(5-phospho-D-ribosyl)imidazole-4-carboxylate + L-aspartate + ATP = (2S)-2-[5-amino-1-(5-phospho-beta-D-ribosyl)imidazole-4-carboxamido]succinate + ADP + phosphate + 2 H(+). The protein operates within purine metabolism; IMP biosynthesis via de novo pathway; 5-amino-1-(5-phospho-D-ribosyl)imidazole-4-carboxamide from 5-amino-1-(5-phospho-D-ribosyl)imidazole-4-carboxylate: step 1/2. The chain is Phosphoribosylaminoimidazole-succinocarboxamide synthase from Methanosarcina acetivorans (strain ATCC 35395 / DSM 2834 / JCM 12185 / C2A).